We begin with the raw amino-acid sequence, 96 residues long: Frd operon uncharacterized protein C (96 aa).

The protein belongs to the HupF/HypC family.

The sequence is that of Frd operon uncharacterized protein C from Proteus vulgaris.